A 108-amino-acid chain; its full sequence is Large ribosomal subunit protein uL23 (108 aa).

This sequence belongs to the universal ribosomal protein uL23 family. Part of the 50S ribosomal subunit. Contacts protein L29, and trigger factor when it is bound to the ribosome.

Functionally, one of the early assembly proteins it binds 23S rRNA. One of the proteins that surrounds the polypeptide exit tunnel on the outside of the ribosome. Forms the main docking site for trigger factor binding to the ribosome. This is Large ribosomal subunit protein uL23 from Polaromonas naphthalenivorans (strain CJ2).